Consider the following 117-residue polypeptide: Large ribosomal subunit protein bL20c (117 aa).

The protein belongs to the bacterial ribosomal protein bL20 family.

The protein localises to the plastid. It localises to the chloroplast. Binds directly to 23S ribosomal RNA and is necessary for the in vitro assembly process of the 50S ribosomal subunit. It is not involved in the protein synthesizing functions of that subunit. This is Large ribosomal subunit protein bL20c from Acorus gramineus (Dwarf sweet flag).